Here is a 199-residue protein sequence, read N- to C-terminus: dITP/XTP pyrophosphatase (199 aa).

7–12 (SNNRGK) is a substrate binding site. 2 residues coordinate Mg(2+): aspartate 39 and aspartate 68. The active-site Proton acceptor is aspartate 68. Residues alanine 69, 154–157 (FGFD), lysine 177, and 182–183 (HR) contribute to the substrate site.

It belongs to the HAM1 NTPase family. In terms of assembly, homodimer. The cofactor is Mg(2+).

The enzyme catalyses XTP + H2O = XMP + diphosphate + H(+). The catalysed reaction is dITP + H2O = dIMP + diphosphate + H(+). It catalyses the reaction ITP + H2O = IMP + diphosphate + H(+). Its function is as follows. Pyrophosphatase that catalyzes the hydrolysis of nucleoside triphosphates to their monophosphate derivatives, with a high preference for the non-canonical purine nucleotides XTP (xanthosine triphosphate), dITP (deoxyinosine triphosphate) and ITP. Seems to function as a house-cleaning enzyme that removes non-canonical purine nucleotides from the nucleotide pool, thus preventing their incorporation into DNA/RNA and avoiding chromosomal lesions. This is dITP/XTP pyrophosphatase from Paracidovorax citrulli (strain AAC00-1) (Acidovorax citrulli).